The primary structure comprises 286 residues: Toxin zeta (286 aa).

39–46 (GQPGSGKT) provides a ligand contact to ATP. The segment at 249 to 286 (MVQNQHQETPEFKAIQQKMESLQPPTPPIPKTPKLPGI) is disordered. Residues 272 to 286 (PPTPPIPKTPKLPGI) are compositionally biased toward pro residues.

It belongs to the zeta toxin family. In the presence of the epsilon antitoxin, forms an inactive PezA(2)PezT(2) heterotetramer.

The catalysed reaction is UDP-N-acetyl-alpha-D-glucosamine + ATP = UDP-N-acetyl-alpha-D-glucosamine 3'-phosphate + ADP + H(+). Toxic component of a type II toxin-antitoxin (TA) system. Phosphorylates UDP-N-acetyl-D-glucosamine (UNAG) on the 3'-hydroxyl group of the N-acetyl-D-glucosamine moiety, yielding UNAG-3P. UNAG-3P inhibits MurA, the first committed step in cell wall synthesis, which is then blocked. Phosphorylation is inhibited by cognate epsilon antitoxin. Part of a postsegregational killing (PSK) system involved in the killing of plasmid-free cells. The zeta toxin induces programmed cell death. The protein is Toxin zeta of Enterococcus hirae.